A 336-amino-acid polypeptide reads, in one-letter code: Delta(1)-pyrroline-2-carboxylate reductase (336 aa).

Residue serine 47 is the Charge relay system of the active site. Histidine 48 functions as the Proton donor in the catalytic mechanism. Arginine 52 is a substrate binding site. NADP(+) is bound at residue 120–124 (HFSAL). Threonine 160 lines the substrate pocket. Residue 178-180 (DFA) participates in NADP(+) binding. 186–187 (RG) is a substrate binding site. Catalysis depends on aspartate 188, which acts as the Charge relay system. Residues 229-230 (HK) and 304-310 (RLPSQRR) each bind NADP(+).

Belongs to the LDH2/MDH2 oxidoreductase family. In terms of assembly, homodimer.

The catalysed reaction is L-proline + NAD(+) = 1-pyrroline-2-carboxylate + NADH + H(+). It carries out the reaction L-proline + NADP(+) = 1-pyrroline-2-carboxylate + NADPH + H(+). Functionally, catalyzes the reduction of Delta(1)-pyrroline-2-carboxylate (Pyr2C) to L-proline, using NADPH as the electron donor. May be involved in a degradation pathway that converts trans-3-hydroxy-L-proline (t3LHyp) to L-proline. The protein is Delta(1)-pyrroline-2-carboxylate reductase of Pseudomonas fluorescens (strain ATCC BAA-477 / NRRL B-23932 / Pf-5).